The chain runs to 247 residues: Adenosylcobinamide-GDP ribazoletransferase (247 aa).

Helical transmembrane passes span 34 to 54, 59 to 79, 113 to 133, 138 to 158, and 194 to 214; these read IITFPLIGLLLGAISGLVFMV, CGVPLAALFSVLVLALMTGGF, GGLALIFVVLAKILVLSELAL, ILASLAAACAVSRGIAALLMY, and VLLPGMHGVAAMVVTMVAIFI.

Belongs to the CobS family. The cofactor is Mg(2+).

The protein resides in the cell inner membrane. The catalysed reaction is alpha-ribazole + adenosylcob(III)inamide-GDP = adenosylcob(III)alamin + GMP + H(+). It carries out the reaction alpha-ribazole 5'-phosphate + adenosylcob(III)inamide-GDP = adenosylcob(III)alamin 5'-phosphate + GMP + H(+). The protein operates within cofactor biosynthesis; adenosylcobalamin biosynthesis; adenosylcobalamin from cob(II)yrinate a,c-diamide: step 7/7. Joins adenosylcobinamide-GDP and alpha-ribazole to generate adenosylcobalamin (Ado-cobalamin). Also synthesizes adenosylcobalamin 5'-phosphate from adenosylcobinamide-GDP and alpha-ribazole 5'-phosphate. The chain is Adenosylcobinamide-GDP ribazoletransferase from Shigella dysenteriae serotype 1 (strain Sd197).